A 341-amino-acid chain; its full sequence is RNA 3'-terminal phosphate cyclase (341 aa).

ATP-binding positions include Gln-102 and 283–287 (HLADQ). His-308 functions as the Tele-AMP-histidine intermediate in the catalytic mechanism.

This sequence belongs to the RNA 3'-terminal cyclase family. Type 1 subfamily.

It is found in the cytoplasm. The enzyme catalyses a 3'-end 3'-phospho-ribonucleotide-RNA + ATP = a 3'-end 2',3'-cyclophospho-ribonucleotide-RNA + AMP + diphosphate. In terms of biological role, catalyzes the conversion of 3'-phosphate to a 2',3'-cyclic phosphodiester at the end of RNA. The mechanism of action of the enzyme occurs in 3 steps: (A) adenylation of the enzyme by ATP; (B) transfer of adenylate to an RNA-N3'P to produce RNA-N3'PP5'A; (C) and attack of the adjacent 2'-hydroxyl on the 3'-phosphorus in the diester linkage to produce the cyclic end product. The biological role of this enzyme is unknown but it is likely to function in some aspects of cellular RNA processing. This is RNA 3'-terminal phosphate cyclase from Pseudomonas aeruginosa (strain UCBPP-PA14).